The primary structure comprises 474 residues: Cysteine--tRNA ligase (474 aa).

Position 29 (cysteine 29) interacts with Zn(2+). A 'HIGH' region motif is present at residues 31–41 (ITPYDHVHVGH). Zn(2+)-binding residues include cysteine 215, histidine 240, and glutamate 244. A 'KMSKS' region motif is present at residues 273 to 277 (KMSKS). An ATP-binding site is contributed by lysine 276.

The protein belongs to the class-I aminoacyl-tRNA synthetase family. Requires Zn(2+) as cofactor.

The protein resides in the cytoplasm. It carries out the reaction tRNA(Cys) + L-cysteine + ATP = L-cysteinyl-tRNA(Cys) + AMP + diphosphate. In Pyrobaculum aerophilum (strain ATCC 51768 / DSM 7523 / JCM 9630 / CIP 104966 / NBRC 100827 / IM2), this protein is Cysteine--tRNA ligase.